Consider the following 923-residue polypeptide: MARALVQSTSIPSSVAGERTTKFNGSGKTKRAVTMLCNAQSSSLTLRDFTGLRGCNAIDTLVRSGETLQSKVAAATYVRRPRGCRFVPKAMFERFTEKAIKVIMLAQEEARRLGHNFVGTEQILLGLIGEGTGIAAKVLKSMGINLKDARVEVEKIIGRGSGFVAVEIPFTPRAKRVLELSLEEARQLGHNYIGSEHLLLGLLREGEGVAARVLENLGADPSNIRTQVIRMVGESNEAVGASVGGGTSGQKMPTLEEYGTNLTKLAEEGKLDPVVGRQPQIERVTQILGRRTKNNPCLIGEPGVGKTAIAEGLAQRIANGDVPETIEGKKVITLDMGLLVAGTKYRGEFEERLKKLMEEIKQSDEIILFIDEVHTLIGAGAAEGAIDAANILKPALARGELQCIGATTLDEYRKHIEKDPALERRFQPVKVPEPTVDETIQILKGLRERYEIHHKLRYTDEDLVAAAQLSYQYISDRFLPDKAIDLIDEAGSRVRLRHAQLPEEAKELEKELRQITKEKNEAVRGQDFEKAGELRDREMDLKAQITALIDKNKEVSKAESEAADTGPLVTEADIQHIVSSWTGIPVEKVSTDESDRLLKMEETLHTRIIGQDEAVKAISRAIRRARVGLKNPNRPIASFIFSGPTGVGKSELAKALAAYYFGSEEAMIRLDMSEFMERHTVSKLIGSPPGYVGYTEGGQLTEAVRRRPYTVVLFDEIEKAHPDVFNMMLQILEDGRLTDSKGRTVDFKNTLLIMTSNVGSSVIEKGGRRIGFDLDLDEKDSSYNRIKSLVTEELKQYFRPEFLNRLDEMIVFRQLTKLEVKEIADIMLKEVFERLKVKEIELQVTERFRDRVVDEGYNPSYGARPLRRAIMRLLEDSMAEKMLANEIKEGDSVIVDVDSDGNVTVLNGSSGTPSDPAPEPIPV.

Residues 92–234 (FERFTEKAIK…RTQVIRMVGE (143 aa)) form the Clp R domain. Repeat stretches follow at residues 95-160 (FTEK…IGRG) and 170-234 (FTPR…MVGE). An i region spans residues 255-502 (LEEYGTNLTK…RVRLRHAQLP (248 aa)). 300-307 (GEPGVGKT) serves as a coordination point for ATP. Residues 509–544 (EKELRQITKEKNEAVRGQDFEKAGELRDREMDLKAQ) enclose the UVR domain. The tract at residues 569-760 (VTEADIQHIV…LLIMTSNVGS (192 aa)) is II. ATP is bound at residue 643 to 650 (GPTGVGKS).

It belongs to the ClpA/ClpB family.

It is found in the plastid. Its subcellular location is the chloroplast. May interact with a ClpP-like protease involved in degradation of denatured proteins in the chloroplast. This chain is ATP-dependent Clp protease ATP-binding subunit ClpA homolog CD4B, chloroplastic (CD4B), found in Solanum lycopersicum (Tomato).